Reading from the N-terminus, the 143-residue chain is General odorant-binding protein 28a (143 aa).

Residues 1 to 21 (MQSTPIILVAIVLLGAALVRA) form the signal peptide. 3 disulfides stabilise this stretch: Cys38–Cys69, Cys65–Cys123, and Cys113–Cys132.

Expressed in antenna, mostly on the medial and posterior surface of the third antennal segment.

It is found in the secreted. The chain is General odorant-binding protein 28a (Obp28a) from Drosophila melanogaster (Fruit fly).